The following is a 313-amino-acid chain: Short-chain dehydrogenase/reductase family 9C member 7 (313 aa).

29–53 (FITGCDSGFGNLLAKQLVDRGMKVL) provides a ligand contact to NADP(+). Ser-160 is a substrate binding site. Catalysis depends on Tyr-172, which acts as the Proton acceptor. Ser-185 is subject to Phosphoserine.

Belongs to the short-chain dehydrogenases/reductases (SDR) family. Highly expressed in liver.

Its subcellular location is the cytoplasm. It catalyses the reaction a N-[omega-(9R,10R)-epoxy-(13R)-hydroxy-(11E)-octadecenoyloxy]acyl-beta-D-glucosyl-(1&lt;-&gt;1)-sphing-4E-enine + NAD(+) = a N-[omega-(9R,10R)-epoxy-13-oxo-(11E)-octadecenoyloxy]acyl-beta-D-glucosyl-(1&lt;-&gt;1)-sphing-4E-enine + NADH + H(+). The enzyme catalyses a N-[omega-(9R,10R)-epoxy-(13R)-hydroxy-(11E)-octadecenoyloxy]-acylsphing-4E-enine + NAD(+) = a N-[omega-(9R,10R)-epoxy-13-oxo-(11E)-octadecenoyloxy]-acylsphing-4E-enine + NADH + H(+). Its function is as follows. Plays a crucial role in the formation of the epidermal permeability barrier. Catalyzes the NAD+-dependent dehydrogenation of the linoleate 9,10-trans-epoxy-11E-13-alcohol esterified in omega-O-acylceramides (such as in N-[omega-(9R,10R)-epoxy-(13R)-hydroxy-(11E)-octadecenoyloxy]-acylsphing-4E-enine) to the corresponding 13-ketone, the reactive moiety required for binding of epidermal ceramides to proteins. Displays weak conversion of all-trans-retinal to all-trans-retinol in the presence of NADH. Has apparently no steroid dehydrogenase activity. The chain is Short-chain dehydrogenase/reductase family 9C member 7 (Sdr9c7) from Mus musculus (Mouse).